The chain runs to 205 residues: ATP-dependent Clp protease proteolytic subunit 2 (205 aa).

Serine 100 functions as the Nucleophile in the catalytic mechanism. Histidine 125 is an active-site residue.

It belongs to the peptidase S14 family. As to quaternary structure, fourteen ClpP subunits assemble into 2 heptameric rings which stack back to back to give a disk-like structure with a central cavity, resembling the structure of eukaryotic proteasomes.

It is found in the cytoplasm. The catalysed reaction is Hydrolysis of proteins to small peptides in the presence of ATP and magnesium. alpha-casein is the usual test substrate. In the absence of ATP, only oligopeptides shorter than five residues are hydrolyzed (such as succinyl-Leu-Tyr-|-NHMec, and Leu-Tyr-Leu-|-Tyr-Trp, in which cleavage of the -Tyr-|-Leu- and -Tyr-|-Trp bonds also occurs).. Functionally, cleaves peptides in various proteins in a process that requires ATP hydrolysis. Has a chymotrypsin-like activity. Plays a major role in the degradation of misfolded proteins. This Chlamydia abortus (strain DSM 27085 / S26/3) (Chlamydophila abortus) protein is ATP-dependent Clp protease proteolytic subunit 2.